A 625-amino-acid chain; its full sequence is Phosphomethylpyrimidine synthase (625 aa).

Residues Asn230, Met259, Tyr288, His324, 344-346 (SRG), 385-388 (DGLR), and Glu424 each bind substrate. Zn(2+) is bound at residue His428. Substrate is bound at residue Tyr451. His492 is a Zn(2+) binding site. [4Fe-4S] cluster is bound by residues Cys572, Cys575, and Cys580.

This sequence belongs to the ThiC family. As to quaternary structure, homodimer. [4Fe-4S] cluster serves as cofactor.

The catalysed reaction is 5-amino-1-(5-phospho-beta-D-ribosyl)imidazole + S-adenosyl-L-methionine = 4-amino-2-methyl-5-(phosphooxymethyl)pyrimidine + CO + 5'-deoxyadenosine + formate + L-methionine + 3 H(+). It participates in cofactor biosynthesis; thiamine diphosphate biosynthesis. Catalyzes the synthesis of the hydroxymethylpyrimidine phosphate (HMP-P) moiety of thiamine from aminoimidazole ribotide (AIR) in a radical S-adenosyl-L-methionine (SAM)-dependent reaction. The chain is Phosphomethylpyrimidine synthase from Xanthomonas axonopodis pv. citri (strain 306).